A 418-amino-acid chain; its full sequence is 3-phosphoshikimate 1-carboxyvinyltransferase (418 aa).

3-phosphoshikimate contacts are provided by K26, S27, and R31. A phosphoenolpyruvate-binding site is contributed by K26. 2 residues coordinate phosphoenolpyruvate: G97 and R125. 6 residues coordinate 3-phosphoshikimate: S170, S171, Q172, D297, N320, and K324. Phosphoenolpyruvate is bound at residue Q172. The Proton acceptor role is filled by D297. Phosphoenolpyruvate is bound by residues R328, R375, and K400.

This sequence belongs to the EPSP synthase family. In terms of assembly, monomer.

The protein resides in the cytoplasm. The catalysed reaction is 3-phosphoshikimate + phosphoenolpyruvate = 5-O-(1-carboxyvinyl)-3-phosphoshikimate + phosphate. It functions in the pathway metabolic intermediate biosynthesis; chorismate biosynthesis; chorismate from D-erythrose 4-phosphate and phosphoenolpyruvate: step 6/7. Its function is as follows. Catalyzes the transfer of the enolpyruvyl moiety of phosphoenolpyruvate (PEP) to the 5-hydroxyl of shikimate-3-phosphate (S3P) to produce enolpyruvyl shikimate-3-phosphate and inorganic phosphate. This Pseudomonas syringae pv. syringae (strain B728a) protein is 3-phosphoshikimate 1-carboxyvinyltransferase.